We begin with the raw amino-acid sequence, 43 residues long: uncharacterized protein (43 aa).

Positions Met1–Ala17 are cleaved as a signal peptide.

This is an uncharacterized protein from Helicobacter pylori (strain J99 / ATCC 700824) (Campylobacter pylori J99).